The primary structure comprises 1164 residues: WASH complex subunit 5 (1164 aa).

Belongs to the strumpellin family. In terms of assembly, probable component of the WASH complex.

The polypeptide is WASH complex subunit 5 (Dictyostelium discoideum (Social amoeba)).